We begin with the raw amino-acid sequence, 301 residues long: Cilia- and flagella-associated protein 161 (301 aa).

It is found in the cytoplasm. Its subcellular location is the cytoskeleton. It localises to the cilium axoneme. In terms of biological role, microtubule inner protein (MIP) part of the dynein-decorated doublet microtubules (DMTs) in cilia axoneme, which is required for motile cilia beating. In Danio rerio (Zebrafish), this protein is Cilia- and flagella-associated protein 161.